Here is a 54-residue protein sequence, read N- to C-terminus: Pars intercerebralis major peptide D1 (54 aa).

Belongs to the granulin family. Post-translationally, six disulfide bonds are present. As to expression, brain.

The protein localises to the secreted. The sequence is that of Pars intercerebralis major peptide D1 from Locusta migratoria (Migratory locust).